A 483-amino-acid chain; its full sequence is Keratin, type II cytoskeletal 8 (483 aa).

A compositionally biased stretch (polar residues) spans 1–16; it reads MSIRVTQKSYKVSTSG. The disordered stretch occupies residues 1-41; the sequence is MSIRVTQKSYKVSTSGPRAFSSRSYTSGPGSRISSSSFSRV. Residues 1–90 form a head region; the sequence is MSIRVTQKSY…DPNIQAVRTQ (90 aa). S9 is subject to Phosphoserine; by PKC/PRKCE. K11 participates in a covalent cross-link: Glycyl lysine isopeptide (Lys-Gly) (interchain with G-Cter in SUMO2). A phosphoserine mark is found at S13, S15, S21, and S22. At R23 the chain carries Omega-N-methylarginine. Residue S24 is modified to Phosphoserine; by PKC/PRKCE. The span at 24-41 shows a compositional bias: low complexity; that stretch reads SYTSGPGSRISSSSFSRV. T26 is modified (phosphothreonine). S27 and S31 each carry phosphoserine. R32 is subject to Omega-N-methylarginine. 3 positions are modified to phosphoserine: S34, S37, and S39. R40 is modified (omega-N-methylarginine). Phosphoserine occurs at positions 43 and 44. Residue R47 is modified to Asymmetric dimethylarginine; alternate. At R47 the chain carries Omega-N-methylarginine; alternate. At S74 the chain carries Phosphoserine; by MAPK. Residues 91 to 126 are coil 1A; sequence EKEQIKTLNNKFASFIDKVRFLEQQNKMLETKWSLL. An IF rod domain is found at 91 to 402; it reads EKEQIKTLNN…KLLEGEESRL (312 aa). Residue K101 is modified to N6-malonyllysine. Glycyl lysine isopeptide (Lys-Gly) (interchain with G-Cter in SUMO2) cross-links involve residues K122 and K130. A linker 1 region spans residues 127–143; sequence QQQKTARSNMDNMFESY. Residues 144-235 form a coil 1B region; sequence INNLRRQLET…QLYEEEIREL (92 aa). A Glycyl lysine isopeptide (Lys-Gly) (interchain with G-Cter in SUMO1); alternate cross-link involves residue K197. K197 participates in a covalent cross-link: Glycyl lysine isopeptide (Lys-Gly) (interchain with G-Cter in SUMO2); alternate. N6-acetyllysine is present on K207. Y228 carries the phosphotyrosine modification. The interval 236–259 is linker 12; the sequence is QSQISDTSVVLSMDNSRSLDMDSI. Residues S253 and S258 each carry the phosphoserine modification. The coil 2 stretch occupies residues 260 to 398; sequence IAEVKAQYED…ATYRKLLEGE (139 aa). The interval 261 to 382 is necessary for interaction with PNN; sequence AEVKAQYEDI…EYQELMNVKL (122 aa). K264 is covalently cross-linked (Glycyl lysine isopeptide (Lys-Gly) (interchain with G-Cter in SUMO2)). A Phosphoserine modification is found at S274. A Glycyl lysine isopeptide (Lys-Gly) (interchain with G-Cter in SUMO2) cross-link involves residue K285. S291 is modified (phosphoserine). K295 participates in a covalent cross-link: Glycyl lysine isopeptide (Lys-Gly) (interchain with G-Cter in SUMO2); alternate. An N6-acetyllysine; alternate modification is found at K295. K304 is covalently cross-linked (Glycyl lysine isopeptide (Lys-Gly) (interchain with G-Cter in SUMO2)). K325 participates in a covalent cross-link: Glycyl lysine isopeptide (Lys-Gly) (interchain with G-Cter in SUMO2); alternate. K325 bears the N6-acetyllysine; alternate mark. S330 carries the phosphoserine modification. Residue K393 forms a Glycyl lysine isopeptide (Lys-Gly) (interchain with G-Cter in SUMO2) linkage. The segment at 399-483 is tail; sequence ESRLESGMQN…VSESSDVLPK (85 aa). Residues S400, S404, S410, S417, and S424 each carry the phosphoserine modification. Position 432 is a phosphoserine; by CaMK2 and MAPK (S432). A Glycyl lysine isopeptide (Lys-Gly) (interchain with G-Cter in SUMO1); alternate cross-link involves residue K472. Residue K472 forms a Glycyl lysine isopeptide (Lys-Gly) (interchain with G-Cter in SUMO2); alternate linkage. Phosphoserine is present on residues S475, S477, and S478.

The protein belongs to the intermediate filament family. In terms of assembly, heterotetramer of two type I and two type II keratins. Forms a heterodimer with KRT18. Associates with KRT20. Interacts with PLEC isoform 1C, when in a heterodimer with KRT18. Interacts with PNN. When associated with KRT19, interacts with DMD. Interacts with TCHP. Interacts with APEX1. Interacts with GPER1. Interacts with EPPK1. Interacts with PKP1 and PKP2. As to quaternary structure, (Microbial infection) Interacts with hepatitis C virus/HCV core protein. Post-translationally, phosphorylation on serine residues is enhanced during EGF stimulation and mitosis. Ser-74 phosphorylation plays an important role in keratin filament reorganization. O-glycosylated. O-GlcNAcylation at multiple sites increases solubility, and decreases stability by inducing proteasomal degradation. In terms of processing, O-glycosylated (O-GlcNAcylated), in a cell cycle-dependent manner. Observed in muscle fibers accumulating in the costameres of myoplasm at the sarcolemma membrane in structures that contain dystrophin and spectrin. Expressed in gingival mucosa and hard palate of the oral cavity.

The protein localises to the cytoplasm. Its subcellular location is the nucleus. The protein resides in the nucleoplasm. It localises to the nucleus matrix. In terms of biological role, together with KRT19, helps to link the contractile apparatus to dystrophin at the costameres of striated muscle. The polypeptide is Keratin, type II cytoskeletal 8 (KRT8) (Homo sapiens (Human)).